Reading from the N-terminus, the 393-residue chain is Digeranylgeranylglycerophospholipid reductase (393 aa).

10 residues coordinate FAD: alanine 14, aspartate 33, cysteine 44, alanine 45, glycine 47, arginine 100, alanine 124, aspartate 280, glycine 292, and isoleucine 293.

The protein belongs to the geranylgeranyl reductase family. DGGGPL reductase subfamily. It depends on FAD as a cofactor.

The enzyme catalyses a 2,3-bis-O-phytanyl-sn-glycerol 1-phospholipid + 8 A = a 2,3-bis-O-(geranylgeranyl)-sn-glycerol 1-phospholipid + 8 AH2. It catalyses the reaction 2,3-bis-O-(phytanyl)-sn-glycerol 1-phosphate + 8 A = 2,3-bis-O-(geranylgeranyl)-sn-glycerol 1-phosphate + 8 AH2. The catalysed reaction is CDP-2,3-bis-O-(geranylgeranyl)-sn-glycerol + 8 AH2 = CDP-2,3-bis-O-(phytanyl)-sn-glycerol + 8 A. It carries out the reaction archaetidylserine + 8 AH2 = 2,3-bis-O-phytanyl-sn-glycero-3-phospho-L-serine + 8 A. The protein operates within membrane lipid metabolism; glycerophospholipid metabolism. Is involved in the reduction of 2,3-digeranylgeranylglycerophospholipids (unsaturated archaeols) into 2,3-diphytanylglycerophospholipids (saturated archaeols) in the biosynthesis of archaeal membrane lipids. Catalyzes the formation of archaetidic acid (2,3-di-O-phytanyl-sn-glyceryl phosphate) from 2,3-di-O-geranylgeranylglyceryl phosphate (DGGGP) via the hydrogenation of each double bond of the isoprenoid chains. Is also probably able to reduce double bonds of geranyl groups in CDP-2,3-bis-O-(geranylgeranyl)-sn-glycerol and archaetidylserine, thus acting at various stages in the biosynthesis of archaeal membrane lipids. This is Digeranylgeranylglycerophospholipid reductase from Methanobrevibacter smithii (strain ATCC 35061 / DSM 861 / OCM 144 / PS).